A 469-amino-acid polypeptide reads, in one-letter code: Protein RdxA (469 aa).

Topologically, residues 1–23 (MSEPLYAPRTPIFPRQISGAFRT) are cytoplasmic. Residues 24–44 (AKWWILAVSLGIYLLTPWLRW) form a helical membrane-spanning segment. Topologically, residues 45-75 (DRGPNLPDQAVLIDIAGRRFFLFGIQIWPHE) are periplasmic. A helical membrane pass occupies residues 76 to 96 (FYFVAGLLIMAGLGLFLFTSA). The Cytoplasmic segment spans residues 97–149 (AGRVWCGYACPQTVWTDLFLLVERRIEGDRNAQIRLHRQAWTAEKVWKRLLKW). Residues 150–170 (SVWAAISLLTGGAWVFYFADA) traverse the membrane as a helical segment. The Periplasmic portion of the chain corresponds to 171 to 183 (PTLLNGLVTLTAH). Residues 184–204 (PVAWITIFVLTATTFVFAGFM) form a helical membrane-spanning segment. At 205-327 (REQICIYACP…PAWRRLFRLR (123 aa)) the chain is on the cytoplasmic side. 2 4Fe-4S ferredoxin-type domains span residues 242–270 (KRSE…IREG) and 266–295 (DIRE…IGRP). The [4Fe-4S] cluster site is built by cysteine 251, cysteine 254, cysteine 257, cysteine 261, cysteine 275, cysteine 278, cysteine 281, and cysteine 285. Residues 328 to 348 (TSLYAVLWAGVGVTLIAALLL) form a helical membrane-spanning segment. Residues 349–469 (RPAVDLAVTP…VKAAFHGARS (121 aa)) lie on the Periplasmic side of the membrane.

Its subcellular location is the cell membrane. Predicted to be involved in a redox process. The sequence is that of Protein RdxA (rdxA) from Cereibacter sphaeroides (strain ATCC 17023 / DSM 158 / JCM 6121 / CCUG 31486 / LMG 2827 / NBRC 12203 / NCIMB 8253 / ATH 2.4.1.) (Rhodobacter sphaeroides).